Reading from the N-terminus, the 491-residue chain is Probable cytosol aminopeptidase (491 aa).

Mn(2+) contacts are provided by K261 and D266. K273 is a catalytic residue. Positions 284, 343, and 345 each coordinate Mn(2+). Residue R347 is part of the active site.

It belongs to the peptidase M17 family. Mn(2+) is required as a cofactor.

The protein localises to the cytoplasm. It carries out the reaction Release of an N-terminal amino acid, Xaa-|-Yaa-, in which Xaa is preferably Leu, but may be other amino acids including Pro although not Arg or Lys, and Yaa may be Pro. Amino acid amides and methyl esters are also readily hydrolyzed, but rates on arylamides are exceedingly low.. The enzyme catalyses Release of an N-terminal amino acid, preferentially leucine, but not glutamic or aspartic acids.. Functionally, presumably involved in the processing and regular turnover of intracellular proteins. Catalyzes the removal of unsubstituted N-terminal amino acids from various peptides. The polypeptide is Probable cytosol aminopeptidase (Geobacter sp. (strain M21)).